The primary structure comprises 336 residues: GTPase Obg (336 aa).

One can recognise an Obg domain in the interval 1–159; that stretch reads MKFLDETKVY…KTIWLRLKLI (159 aa). The region spanning 160–327 is the OBG-type G domain; that stretch reads ADAGLVGLPN…TLRALRSVID (168 aa). GTP contacts are provided by residues 166-173, 191-195, 212-215, 279-282, and 308-310; these read GLPNAGKS, FTTLH, DIPG, SQID, and SAV. Mg(2+) is bound by residues Ser173 and Thr193.

The protein belongs to the TRAFAC class OBG-HflX-like GTPase superfamily. OBG GTPase family. As to quaternary structure, monomer. The cofactor is Mg(2+).

The protein localises to the cytoplasm. In terms of biological role, an essential GTPase which binds GTP, GDP and possibly (p)ppGpp with moderate affinity, with high nucleotide exchange rates and a fairly low GTP hydrolysis rate. Plays a role in control of the cell cycle, stress response, ribosome biogenesis and in those bacteria that undergo differentiation, in morphogenesis control. This Sinorhizobium medicae (strain WSM419) (Ensifer medicae) protein is GTPase Obg.